Here is a 263-residue protein sequence, read N- to C-terminus: Glutamate 5-kinase (263 aa).

Lys-15 lines the ATP pocket. Substrate-binding residues include Ser-55, Asp-142, and Asn-154. ATP is bound by residues 174–175 (SD) and 216–222 (TGGIETK).

The protein belongs to the glutamate 5-kinase family.

The protein localises to the cytoplasm. It catalyses the reaction L-glutamate + ATP = L-glutamyl 5-phosphate + ADP. Its pathway is amino-acid biosynthesis; L-proline biosynthesis; L-glutamate 5-semialdehyde from L-glutamate: step 1/2. Catalyzes the transfer of a phosphate group to glutamate to form L-glutamate 5-phosphate. This Alkaliphilus oremlandii (strain OhILAs) (Clostridium oremlandii (strain OhILAs)) protein is Glutamate 5-kinase.